The following is a 109-amino-acid chain: MTETEFLALVDQVLDSIESQADDWAASQDVDIETSRSGNVLTLVFEDGTHVVVNSQAAMQEIWVAARSGGFHYRYDGQHWNDTRGGPRLPDALSQICSEAAGVPVAVRL.

Belongs to the frataxin family.

Involved in iron-sulfur (Fe-S) cluster assembly. May act as a regulator of Fe-S biogenesis. The protein is Iron-sulfur cluster assembly protein CyaY of Bordetella petrii (strain ATCC BAA-461 / DSM 12804 / CCUG 43448).